The chain runs to 763 residues: Phosphoglycerol transferase I (763 aa).

Helical transmembrane passes span 1–21, 26–46, 77–97, and 108–128; these read MSEL…AWKA, WWFA…ITLF, ILPG…LGWI, and FGYS…SPAF.

It belongs to the OpgB family.

It localises to the cell inner membrane. The enzyme catalyses a phosphatidylglycerol + a membrane-derived-oligosaccharide D-glucose = a 1,2-diacyl-sn-glycerol + a membrane-derived-oligosaccharide 6-(glycerophospho)-D-glucose.. The protein operates within glycan metabolism; osmoregulated periplasmic glucan (OPG) biosynthesis. Functionally, transfers a phosphoglycerol residue from phosphatidylglycerol to the membrane-bound nascent glucan backbones. The sequence is that of Phosphoglycerol transferase I from Escherichia coli O17:K52:H18 (strain UMN026 / ExPEC).